A 292-amino-acid chain; its full sequence is Elongation factor Ts (292 aa).

The interval 80–83 (TDFV) is involved in Mg(2+) ion dislocation from EF-Tu.

The protein belongs to the EF-Ts family.

The protein resides in the cytoplasm. Functionally, associates with the EF-Tu.GDP complex and induces the exchange of GDP to GTP. It remains bound to the aminoacyl-tRNA.EF-Tu.GTP complex up to the GTP hydrolysis stage on the ribosome. This Limosilactobacillus fermentum (strain NBRC 3956 / LMG 18251) (Lactobacillus fermentum) protein is Elongation factor Ts.